Here is a 103-residue protein sequence, read N- to C-terminus: Large ribosomal subunit protein bL21 (103 aa).

It belongs to the bacterial ribosomal protein bL21 family. Part of the 50S ribosomal subunit. Contacts protein L20.

Functionally, this protein binds to 23S rRNA in the presence of protein L20. This is Large ribosomal subunit protein bL21 from Maridesulfovibrio salexigens (strain ATCC 14822 / DSM 2638 / NCIMB 8403 / VKM B-1763) (Desulfovibrio salexigens).